The sequence spans 105 residues: ATP synthase subunit c (105 aa).

A run of 2 helical transmembrane segments spans residues 32 to 52 (SILG…IGMG) and 78 to 98 (VAMA…IIAI).

The protein belongs to the ATPase C chain family. F-type ATPases have 2 components, F(1) - the catalytic core - and F(0) - the membrane proton channel. F(1) has five subunits: alpha(3), beta(3), gamma(1), delta(1), epsilon(1). F(0) has three main subunits: a(1), b(2) and c(10-14). The alpha and beta chains form an alternating ring which encloses part of the gamma chain. F(1) is attached to F(0) by a central stalk formed by the gamma and epsilon chains, while a peripheral stalk is formed by the delta and b chains.

The protein localises to the cell inner membrane. Its function is as follows. F(1)F(0) ATP synthase produces ATP from ADP in the presence of a proton or sodium gradient. F-type ATPases consist of two structural domains, F(1) containing the extramembraneous catalytic core and F(0) containing the membrane proton channel, linked together by a central stalk and a peripheral stalk. During catalysis, ATP synthesis in the catalytic domain of F(1) is coupled via a rotary mechanism of the central stalk subunits to proton translocation. Key component of the F(0) channel; it plays a direct role in translocation across the membrane. A homomeric c-ring of between 10-14 subunits forms the central stalk rotor element with the F(1) delta and epsilon subunits. The protein is ATP synthase subunit c of Helicobacter pylori (strain ATCC 700392 / 26695) (Campylobacter pylori).